The sequence spans 191 residues: MKRSKVERQSMLKEKIELTPFVTDEQLAKEFHVSIQTIRLDRMELAIPELRERIKHVATNQWNETVKALPLEEVIGEVIDLELDERAISIMDITPDLVFSRNKIARGHHIFAQANSLAVAVINDELALTAKSNLKFTRQVNEGERVIAKAIVKGKDNRDRTIVEVSSYVENELVFTGEFFMFHSSNEKGEN.

It belongs to the FapR family.

Transcriptional factor involved in regulation of membrane lipid biosynthesis by repressing genes involved in fatty acid and phospholipid metabolism. The sequence is that of Transcription factor FapR from Oceanobacillus iheyensis (strain DSM 14371 / CIP 107618 / JCM 11309 / KCTC 3954 / HTE831).